The following is a 369-amino-acid chain: Iron-sulfur cluster assembly SufBD family protein AF_2365 (369 aa).

It belongs to the iron-sulfur cluster assembly SufBD family.

The protein is Iron-sulfur cluster assembly SufBD family protein AF_2365 of Archaeoglobus fulgidus (strain ATCC 49558 / DSM 4304 / JCM 9628 / NBRC 100126 / VC-16).